A 426-amino-acid polypeptide reads, in one-letter code: Glutamate-1-semialdehyde 2,1-aminomutase (426 aa).

Lys265 bears the N6-(pyridoxal phosphate)lysine mark.

The protein belongs to the class-III pyridoxal-phosphate-dependent aminotransferase family. HemL subfamily. Homodimer. Requires pyridoxal 5'-phosphate as cofactor.

The protein resides in the cytoplasm. The catalysed reaction is (S)-4-amino-5-oxopentanoate = 5-aminolevulinate. It participates in porphyrin-containing compound metabolism; protoporphyrin-IX biosynthesis; 5-aminolevulinate from L-glutamyl-tRNA(Glu): step 2/2. The polypeptide is Glutamate-1-semialdehyde 2,1-aminomutase (Escherichia fergusonii (strain ATCC 35469 / DSM 13698 / CCUG 18766 / IAM 14443 / JCM 21226 / LMG 7866 / NBRC 102419 / NCTC 12128 / CDC 0568-73)).